Consider the following 277-residue polypeptide: MDNVVDRHVFYISDGTAITAEVLGHAVMSQFPVTISSITLPFVENESRARAVKDQIDAIYQQTGVRPLVFYSIVLPEIRAIILQSEGFCQDIVQALVAPLQQEMKQDPTPIAHRTHGLNPGNLNKYDARIAAIDYTLAHDDGISLRNLDQAQVILLGVSRCGKTPTSLYLAMQFGIRAANYPFIADDMDNLTLPTSLKPLQHKLFGLTIDPERLAAIREERRENSRYASLRQCRMEVAEVEALYRKNQIPCLNSTNYSVEEIATKILDIMGLNRRMY.

ADP is bound at residue 157–164 (GVSRCGKT).

Belongs to the pyruvate, phosphate/water dikinase regulatory protein family. PSRP subfamily.

It carries out the reaction [pyruvate, water dikinase] + ADP = [pyruvate, water dikinase]-phosphate + AMP + H(+). It catalyses the reaction [pyruvate, water dikinase]-phosphate + phosphate + H(+) = [pyruvate, water dikinase] + diphosphate. Bifunctional serine/threonine kinase and phosphorylase involved in the regulation of the phosphoenolpyruvate synthase (PEPS) by catalyzing its phosphorylation/dephosphorylation. This is Phosphoenolpyruvate synthase regulatory protein from Salmonella gallinarum (strain 287/91 / NCTC 13346).